Consider the following 350-residue polypeptide: C5a anaphylatoxin chemotactic receptor 1 (350 aa).

Residues 1–37 lie on the Extracellular side of the membrane; it reads MDSFDYTTPDYGHYDDKDTLDLNTPVDKTSNTLRVPD. The tract at residues 10–18 is required for CHIPS binding; the sequence is DYGHYDDKD. 2 positions are modified to sulfotyrosine: Y11 and Y14. The interval 21–30 is involved in C5a binding; sequence DLNTPVDKTS. Residues 38–64 traverse the membrane as a helical segment; the sequence is ILALVIFAVVFLVGVLGNALVVWVTAF. Residues 65–69 are Cytoplasmic-facing; sequence EAKRT. Residues 70–93 form a helical membrane-spanning segment; the sequence is INAIWFLNLAVADFLSCLALPILF. Residues 94–110 lie on the Extracellular side of the membrane; that stretch reads TSIVQHHHWPFGGAACS. C109 and C188 are oxidised to a cystine. Residues 111 to 132 form a helical membrane-spanning segment; sequence ILPSLILLNMYASILLLATISA. Residues 133–153 are Cytoplasmic-facing; sequence DRFLLVFKPIWCQNFRGAGLA. The helical transmembrane segment at 154-174 threads the bilayer; it reads WIACAVAWGLALLLTIPSFLY. Residues 175–200 are Extracellular-facing; that stretch reads RVVREEYFPPKVLCGVDYSHDKRRER. Residues 201-226 traverse the membrane as a helical segment; sequence AVAIVRLVLGFLWPLLTLMICYTFIL. Over 227–242 the chain is Cytoplasmic; the sequence is LRTWSRRATRSTKTLK. A helical transmembrane segment spans residues 243 to 265; it reads VVVAVVASFFIFWLPYQVTGIMM. The Extracellular segment spans residues 266–282; the sequence is SFLEPSSPTFRLLKKLD. The helical transmembrane segment at 283-303 threads the bilayer; it reads SLCVSFAYINCCINPIIYVVA. At 304–350 the chain is on the cytoplasmic side; it reads GQGFQGRLQKSLPSLLRNVLTEESVVRESKSFARSTVDTMADKTQAV. 6 positions are modified to phosphoserine: S314, S317, S327, S332, S334, and S338.

This sequence belongs to the G-protein coupled receptor 1 family. In terms of assembly, homodimer. May also form higher-order oligomers. Interacts (when phosphorylated) with ARRB1 and ARRB2; the interaction is associated with internalization of C5aR. Interacts (via N-terminal domain) with S.aureus chemotaxis inhibitory protein (CHIPS); the interaction blocks the receptor and may thus inhibit the immune response. Sulfation plays a critical role in the association of C5aR with C5a, but no significant role in the ability of the receptor to transduce a signal and mobilize calcium in response to a small peptide agonist. Sulfation at Tyr-14 is important for CHIPS binding. In terms of processing, phosphorylated on serine residues in response to C5a binding, resulting in internalization of the receptor and short-term desensitization to C5a.

It is found in the cell membrane. The protein resides in the cytoplasmic vesicle. Its function is as follows. Receptor for the chemotactic and inflammatory peptide anaphylatoxin C5a. The ligand interacts with at least two sites on the receptor: a high-affinity site on the extracellular N-terminus, and a second site in the transmembrane region which activates downstream signaling events. Receptor activation stimulates chemotaxis, granule enzyme release, intracellular calcium release and superoxide anion production. This Pan troglodytes (Chimpanzee) protein is C5a anaphylatoxin chemotactic receptor 1 (C5AR1).